Here is a 203-residue protein sequence, read N- to C-terminus: Tic20 family protein Ycf60 (203 aa).

Transmembrane regions (helical) follow at residues 2-22 (IRLF…RLAI), 51-71 (IIPY…YVLP), 84-104 (ILLP…VTFF), 131-151 (ILLF…PIEF), and 153-173 (ISFI…STIT).

Belongs to the Tic20 family.

It is found in the plastid. Its subcellular location is the chloroplast membrane. The polypeptide is Tic20 family protein Ycf60 (ycf60) (Porphyra purpurea (Red seaweed)).